Consider the following 147-residue polypeptide: Ponticulin-like protein C4 (147 aa).

The first 20 residues, 1 to 20 (MKFTKSLLLLIVAVFASSNA), serve as a signal peptide directing secretion. Asn118 carries the GPI-like-anchor amidated asparagine lipid modification. The N-linked (GlcNAc...) asparagine glycan is linked to Asn118. The propeptide at 119–147 (SSESDSSDSTRIGASFALAAAALLSMIAL) is removed in mature form.

This sequence belongs to the ponticulin family. In terms of processing, the GPI-like-anchor contains a phosphoceramide group, rather than a phosphatidyl group.

The protein localises to the cell membrane. The polypeptide is Ponticulin-like protein C4 (ponC4) (Dictyostelium discoideum (Social amoeba)).